The following is a 266-amino-acid chain: UPF0294 protein YafD (266 aa).

Belongs to the UPF0294 family.

The protein localises to the cytoplasm. This is UPF0294 protein YafD from Salmonella dublin (strain CT_02021853).